The sequence spans 980 residues: NACHT, LRR and PYD domains-containing protein 7 (980 aa).

The region spanning 1-93 (MTSPQLEWTL…CKMAKAEMME (93 aa)) is the Pyrin domain. Residues 104–123 (ELGDAEEDSELAKPGEKEGW) are disordered. The segment covering 113–123 (ELAKPGEKEGW) has biased composition (basic and acidic residues). Positions 172–491 (YTVVLHGPAG…LEKEEGEDRD (320 aa)) constitute an NACHT domain. Position 178-185 (178-185 (GPAGVGKT)) interacts with ATP. LRR repeat units follow at residues 614-638 (CQDL…DFEL), 674-697 (NSNL…ILCD), 760-784 (KCNL…FFYV), 788-810 (NQSL…MLLY), 817-840 (KHFL…DLAA), 845-868 (SKKL…FLCE), 874-897 (DCKL…YLSE), 902-928 (ACSL…ALEN), and 933-957 (LKHL…VKEK).

This sequence belongs to the NLRP family. Directly interacts with CASP1 and IL1B. Expressed in numerous tissues including uterus and ovary, with low levels in heart and brain. Not detected in skeletal muscle.

Functionally, inhibits CASP1/caspase-1-dependent IL1B secretion. The protein is NACHT, LRR and PYD domains-containing protein 7 (NLRP7) of Homo sapiens (Human).